The primary structure comprises 199 residues: Interleukin-11 (199 aa).

Positions Met-1 to Ala-21 are cleaved as a signal peptide. The important for interaction with IL11RA and for the stimulation of cell proliferation stretch occupies residues His-182 to Arg-190.

The protein belongs to the IL-6 superfamily. In terms of assembly, interacts with IL11RA to associate with IL6ST, giving rise to a multimeric signaling complex.

The protein localises to the secreted. Its function is as follows. Cytokine that stimulates the proliferation of hematopoietic stem cells and megakaryocyte progenitor cells and induces megakaryocyte maturation resulting in increased platelet production. Also promotes the proliferation of hepatocytes in response to liver damage. Binding to its receptor formed by IL6ST and IL11RA activates a signaling cascade that promotes cell proliferation. Signaling leads to the activation of intracellular protein kinases and the phosphorylation of STAT3. The interaction with the membrane-bound IL11RA and IL6ST stimulates 'classic signaling', whereas the binding of IL11 and soluble IL11RA to IL6ST stimulates 'trans-signaling'. The chain is Interleukin-11 from Rattus norvegicus (Rat).